Here is a 659-residue protein sequence, read N- to C-terminus: DNA ligase (659 aa).

Residues 32-36, 81-82, and glutamate 110 each bind NAD(+); these read DAEYD and SL. Lysine 112 serves as the catalytic N6-AMP-lysine intermediate. Positions 133, 168, 284, and 308 each coordinate NAD(+). Zn(2+)-binding residues include cysteine 402, cysteine 405, cysteine 420, and cysteine 425. Residues 582–659 form the BRCT domain; sequence AKPQIFAGKS…SEEEFAELLP (78 aa).

Belongs to the NAD-dependent DNA ligase family. LigA subfamily. Mg(2+) is required as a cofactor. Requires Mn(2+) as cofactor.

The catalysed reaction is NAD(+) + (deoxyribonucleotide)n-3'-hydroxyl + 5'-phospho-(deoxyribonucleotide)m = (deoxyribonucleotide)n+m + AMP + beta-nicotinamide D-nucleotide.. In terms of biological role, DNA ligase that catalyzes the formation of phosphodiester linkages between 5'-phosphoryl and 3'-hydroxyl groups in double-stranded DNA using NAD as a coenzyme and as the energy source for the reaction. It is essential for DNA replication and repair of damaged DNA. This chain is DNA ligase, found in Desulfitobacterium hafniense (strain DSM 10664 / DCB-2).